Reading from the N-terminus, the 736-residue chain is Phosphoribosylformylglycinamidine synthase subunit PurL (736 aa).

The active site involves His49. ATP contacts are provided by Tyr52 and Lys91. Residue Glu93 coordinates Mg(2+). Residues 94-97 (SHNH) and Arg116 each bind substrate. His95 serves as the catalytic Proton acceptor. Asp117 is a Mg(2+) binding site. Gln240 provides a ligand contact to substrate. Asp268 is a binding site for Mg(2+). Position 312 to 314 (312 to 314 (ESQ)) interacts with substrate. ATP is bound by residues Asp493 and Gly530. Asn531 contributes to the Mg(2+) binding site. Substrate is bound at residue Ser533.

It belongs to the FGAMS family. In terms of assembly, monomer. Part of the FGAM synthase complex composed of 1 PurL, 1 PurQ and 2 PurS subunits.

The protein resides in the cytoplasm. The enzyme catalyses N(2)-formyl-N(1)-(5-phospho-beta-D-ribosyl)glycinamide + L-glutamine + ATP + H2O = 2-formamido-N(1)-(5-O-phospho-beta-D-ribosyl)acetamidine + L-glutamate + ADP + phosphate + H(+). Its pathway is purine metabolism; IMP biosynthesis via de novo pathway; 5-amino-1-(5-phospho-D-ribosyl)imidazole from N(2)-formyl-N(1)-(5-phospho-D-ribosyl)glycinamide: step 1/2. In terms of biological role, part of the phosphoribosylformylglycinamidine synthase complex involved in the purines biosynthetic pathway. Catalyzes the ATP-dependent conversion of formylglycinamide ribonucleotide (FGAR) and glutamine to yield formylglycinamidine ribonucleotide (FGAM) and glutamate. The FGAM synthase complex is composed of three subunits. PurQ produces an ammonia molecule by converting glutamine to glutamate. PurL transfers the ammonia molecule to FGAR to form FGAM in an ATP-dependent manner. PurS interacts with PurQ and PurL and is thought to assist in the transfer of the ammonia molecule from PurQ to PurL. The sequence is that of Phosphoribosylformylglycinamidine synthase subunit PurL from Rhodopseudomonas palustris (strain BisB18).